A 425-amino-acid polypeptide reads, in one-letter code: uncharacterized protein (425 aa).

The HD domain occupies 55 to 181 (RYSHSLGVYE…DLDADRMDYL (127 aa)).

This is an uncharacterized protein from Mycoplasma pneumoniae (strain ATCC 29342 / M129 / Subtype 1) (Mycoplasmoides pneumoniae).